A 358-amino-acid polypeptide reads, in one-letter code: Peptide chain release factor 1 (358 aa).

Position 233 is an N5-methylglutamine (glutamine 233).

Belongs to the prokaryotic/mitochondrial release factor family. In terms of processing, methylated by PrmC. Methylation increases the termination efficiency of RF1.

It is found in the cytoplasm. In terms of biological role, peptide chain release factor 1 directs the termination of translation in response to the peptide chain termination codons UAG and UAA. The polypeptide is Peptide chain release factor 1 (Clostridium botulinum (strain Okra / Type B1)).